A 165-amino-acid polypeptide reads, in one-letter code: Lipoprotein signal peptidase (165 aa).

The next 3 helical transmembrane spans lie at 9-29, 69-89, and 98-118; these read FLAI…VLLY, KYFL…FLFL, and IRFS…DIVF. Active-site residues include Asp-124 and Asp-142. The helical transmembrane segment at 133–153 threads the bilayer; that stretch reads WFFPTFNFADIFISLGTLIFI.

Belongs to the peptidase A8 family.

The protein resides in the cell inner membrane. It carries out the reaction Release of signal peptides from bacterial membrane prolipoproteins. Hydrolyzes -Xaa-Yaa-Zaa-|-(S,diacylglyceryl)Cys-, in which Xaa is hydrophobic (preferably Leu), and Yaa (Ala or Ser) and Zaa (Gly or Ala) have small, neutral side chains.. The protein operates within protein modification; lipoprotein biosynthesis (signal peptide cleavage). This protein specifically catalyzes the removal of signal peptides from prolipoproteins. The sequence is that of Lipoprotein signal peptidase from Chlamydia abortus (strain DSM 27085 / S26/3) (Chlamydophila abortus).